The sequence spans 607 residues: Guanine nucleotide-binding protein-like 1 (607 aa).

The span at 1–14 shows a compositional bias: basic residues; the sequence is MPRKKPFSVKQKKK. The disordered stretch occupies residues 1–81; that stretch reads MPRKKPFSVK…GPRGYDPNRY (81 aa). Residues 15 to 26 show a composition bias toward basic and acidic residues; it reads QLQDKRERKRGL. 3 positions are modified to phosphoserine: Ser-32, Ser-33, and Ser-34. 2 positions are modified to phosphothreonine: Thr-48 and Thr-50. Phosphoserine occurs at positions 51 and 68. Positions 178–418 constitute a CP-type G domain; sequence WRQLWRVLEM…LCDCPGLIFP (241 aa). Position 225 to 228 (225 to 228) interacts with GTP; sequence NKVD. Ser-324 carries the phosphoserine modification. GTP contacts are provided by residues 367-374 and 411-415; these read GFPNVGKS and DCPGL. Residues 544 to 607 form a disordered region; it reads GRVGPAGDEE…PYALLGEGEC (64 aa). Residues 550–585 show a composition bias toward acidic residues; it reads GDEEEEEEEELSSSCEEEGEEDRDADEEGEGDEDTP. Phosphoserine is present on residues Ser-561, Ser-562, and Ser-563.

This sequence belongs to the TRAFAC class YlqF/YawG GTPase family.

Possible regulatory or functional link with the histocompatibility cluster. The chain is Guanine nucleotide-binding protein-like 1 (Gnl1) from Rattus norvegicus (Rat).